The chain runs to 584 residues: A-type ATP synthase subunit A (584 aa).

Residue 234–241 coordinates ATP; that stretch reads GPFGSGKT.

This sequence belongs to the ATPase alpha/beta chains family. In terms of assembly, has multiple subunits with at least A(3), B(3), C, D, E, F, H, I and proteolipid K(x).

It is found in the cell membrane. It catalyses the reaction ATP + H2O + 4 H(+)(in) = ADP + phosphate + 5 H(+)(out). Component of the A-type ATP synthase that produces ATP from ADP in the presence of a proton gradient across the membrane. The A chain is the catalytic subunit. This chain is A-type ATP synthase subunit A, found in Methanoculleus marisnigri (strain ATCC 35101 / DSM 1498 / JR1).